Consider the following 157-residue polypeptide: SsrA-binding protein (157 aa).

A disordered region spans residues 132-157; it reads VHDKRQAQKDKDWAREKDRLFKKAYK. Residues 135 to 157 show a composition bias toward basic and acidic residues; that stretch reads KRQAQKDKDWAREKDRLFKKAYK.

This sequence belongs to the SmpB family.

It localises to the cytoplasm. Required for rescue of stalled ribosomes mediated by trans-translation. Binds to transfer-messenger RNA (tmRNA), required for stable association of tmRNA with ribosomes. tmRNA and SmpB together mimic tRNA shape, replacing the anticodon stem-loop with SmpB. tmRNA is encoded by the ssrA gene; the 2 termini fold to resemble tRNA(Ala) and it encodes a 'tag peptide', a short internal open reading frame. During trans-translation Ala-aminoacylated tmRNA acts like a tRNA, entering the A-site of stalled ribosomes, displacing the stalled mRNA. The ribosome then switches to translate the ORF on the tmRNA; the nascent peptide is terminated with the 'tag peptide' encoded by the tmRNA and targeted for degradation. The ribosome is freed to recommence translation, which seems to be the essential function of trans-translation. The chain is SsrA-binding protein from Francisella tularensis subsp. tularensis (strain FSC 198).